The chain runs to 443 residues: Xaa-Pro dipeptidase (443 aa).

Mn(2+) is bound by residues Asp-246, Asp-257, His-339, Glu-384, and Glu-423.

Belongs to the peptidase M24B family. Bacterial-type prolidase subfamily. Mn(2+) serves as cofactor.

The enzyme catalyses Xaa-L-Pro dipeptide + H2O = an L-alpha-amino acid + L-proline. Functionally, splits dipeptides with a prolyl residue in the C-terminal position. This is Xaa-Pro dipeptidase from Escherichia coli O157:H7.